We begin with the raw amino-acid sequence, 84 residues long: UPF0410 protein YmgE (84 aa).

Transmembrane regions (helical) follow at residues 1–21 (MGII…KLIM), 27–47 (GGFF…GWLA), and 58–78 (GFNL…LGVF).

The protein belongs to the UPF0410 family.

The protein localises to the cell inner membrane. The sequence is that of UPF0410 protein YmgE (ymgE) from Escherichia coli O127:H6 (strain E2348/69 / EPEC).